The chain runs to 143 residues: Large ribosomal subunit protein uL11 (143 aa).

Belongs to the universal ribosomal protein uL11 family. As to quaternary structure, part of the ribosomal stalk of the 50S ribosomal subunit. Interacts with L10 and the large rRNA to form the base of the stalk. L10 forms an elongated spine to which 2 L12 dimers bind in a sequential fashion forming a pentameric L10(L12)2(L12)2 complex. Post-translationally, one or more lysine residues are methylated.

Its function is as follows. Forms part of the ribosomal stalk which helps the ribosome interact with GTP-bound translation factors. The protein is Large ribosomal subunit protein uL11 of Agrobacterium fabrum (strain C58 / ATCC 33970) (Agrobacterium tumefaciens (strain C58)).